Reading from the N-terminus, the 89-residue chain is Small ribosomal subunit protein uS15 (89 aa).

This sequence belongs to the universal ribosomal protein uS15 family. In terms of assembly, part of the 30S ribosomal subunit. Forms a bridge to the 50S subunit in the 70S ribosome, contacting the 23S rRNA.

In terms of biological role, one of the primary rRNA binding proteins, it binds directly to 16S rRNA where it helps nucleate assembly of the platform of the 30S subunit by binding and bridging several RNA helices of the 16S rRNA. Its function is as follows. Forms an intersubunit bridge (bridge B4) with the 23S rRNA of the 50S subunit in the ribosome. This chain is Small ribosomal subunit protein uS15, found in Corynebacterium glutamicum (strain R).